Here is a 257-residue protein sequence, read N- to C-terminus: MEPLVIKLGGVLLDNEEALERVFTALQEYRQTHERQLVVVHGGGYLVDELMEKLQLPIVKEQGLRVTPADQIGIITGALAGIANKTLLSWATKYQLASVGLYLGDGNVVTVSQLSEELGHVGKAMPGDAKLLKTLLDAGYMPIISSIGVTDKGELMNVNADQAATAIAQTLGADLVLLSDVSGILDGKGQKIPDINVEKAEQLIAHGIITDGMIVKVNAALDAARTLDRPVDIASWRHADQLTDLFNGVPVGTRILA.

Residues 43–44 (GG), arginine 65, and asparagine 157 each bind substrate. Residues 180 to 185 (DVSGIL) and 208 to 210 (IIT) each bind ATP.

The protein belongs to the acetylglutamate kinase family. ArgB subfamily. Homodimer.

The protein resides in the cytoplasm. The enzyme catalyses N-acetyl-L-glutamate + ATP = N-acetyl-L-glutamyl 5-phosphate + ADP. Its pathway is amino-acid biosynthesis; L-arginine biosynthesis; N(2)-acetyl-L-ornithine from L-glutamate: step 2/4. Functionally, catalyzes the ATP-dependent phosphorylation of N-acetyl-L-glutamate. The polypeptide is Acetylglutamate kinase (Photorhabdus laumondii subsp. laumondii (strain DSM 15139 / CIP 105565 / TT01) (Photorhabdus luminescens subsp. laumondii)).